The primary structure comprises 504 residues: Probable cytosol aminopeptidase (504 aa).

Residues Lys-268 and Asp-273 each contribute to the Mn(2+) site. Lys-280 is an active-site residue. The Mn(2+) site is built by Asp-291, Asp-350, and Glu-352. Arg-354 is an active-site residue.

The protein belongs to the peptidase M17 family. Mn(2+) is required as a cofactor.

It localises to the cytoplasm. The enzyme catalyses Release of an N-terminal amino acid, Xaa-|-Yaa-, in which Xaa is preferably Leu, but may be other amino acids including Pro although not Arg or Lys, and Yaa may be Pro. Amino acid amides and methyl esters are also readily hydrolyzed, but rates on arylamides are exceedingly low.. It carries out the reaction Release of an N-terminal amino acid, preferentially leucine, but not glutamic or aspartic acids.. Presumably involved in the processing and regular turnover of intracellular proteins. Catalyzes the removal of unsubstituted N-terminal amino acids from various peptides. The sequence is that of Probable cytosol aminopeptidase from Psychromonas ingrahamii (strain DSM 17664 / CCUG 51855 / 37).